We begin with the raw amino-acid sequence, 427 residues long: Adenylosuccinate synthetase (427 aa).

Residues 12–18 (GDEGKGK) and 40–42 (GHT) contribute to the GTP site. The Proton acceptor role is filled by D13. D13 and G40 together coordinate Mg(2+). IMP contacts are provided by residues 13 to 16 (DEGK), 38 to 41 (NAGH), T128, R142, Q223, T238, and R302. The Proton donor role is filled by H41. 298–304 (TTTGRPR) is a substrate binding site. Residues R304, 330–332 (SID), and 412–414 (SVG) contribute to the GTP site.

This sequence belongs to the adenylosuccinate synthetase family. Homodimer. The cofactor is Mg(2+).

The protein resides in the cytoplasm. It carries out the reaction IMP + L-aspartate + GTP = N(6)-(1,2-dicarboxyethyl)-AMP + GDP + phosphate + 2 H(+). The protein operates within purine metabolism; AMP biosynthesis via de novo pathway; AMP from IMP: step 1/2. Plays an important role in the de novo pathway of purine nucleotide biosynthesis. Catalyzes the first committed step in the biosynthesis of AMP from IMP. This chain is Adenylosuccinate synthetase, found in Staphylococcus epidermidis (strain ATCC 35984 / DSM 28319 / BCRC 17069 / CCUG 31568 / BM 3577 / RP62A).